The chain runs to 226 residues: V-type proton ATPase subunit E (226 aa).

The protein belongs to the V-ATPase E subunit family. In terms of assembly, V-ATPase is a heteromultimeric enzyme made up of two complexes: the ATP-hydrolytic V1 complex and the proton translocation V0 complex. The V1 complex consists of three catalytic AB heterodimers that form a heterohexamer, three peripheral stalks each consisting of EG heterodimers, one central rotor including subunits D and F, and the regulatory subunits C and H. The proton translocation complex V0 consists of the proton transport subunit a, a ring of proteolipid subunits c9c'', rotary subunit d, subunits e and f, and the accessory subunits VhaAC45 and ATP6AP2.

In terms of biological role, subunit of the V1 complex of vacuolar(H+)-ATPase (V-ATPase), a multisubunit enzyme composed of a peripheral complex (V1) that hydrolyzes ATP and a membrane integral complex (V0) that translocates protons. V-ATPase is responsible for acidifying and maintaining the pH of intracellular compartments and in some cell types, is targeted to the plasma membrane, where it is responsible for acidifying the extracellular environment. This chain is V-type proton ATPase subunit E (VHA26), found in Manduca sexta (Tobacco hawkmoth).